Reading from the N-terminus, the 1198-residue chain is DNA polymerase (1198 aa).

Disordered stretches follow at residues 1 to 90 (MALV…TVVA), 179 to 198 (LEQP…QPNP), and 906 to 931 (ALAD…PSGT). The segment covering 30–40 (QQPPRAAPAPA) has biased composition (low complexity).

It belongs to the DNA polymerase type-B family. As to quaternary structure, heterodimer with the terminal protein; this heterodimer binds to bp 9 to 18 of the genome. Forms a complex with viral pTP, DBP and hosts NFIA and POU2F1/OCT1 for initiation of replication.

The protein resides in the host nucleus. The catalysed reaction is DNA(n) + a 2'-deoxyribonucleoside 5'-triphosphate = DNA(n+1) + diphosphate. Its function is as follows. Eukaryotic-type DNA polymerase involved in viral genomic replication. DNA synthesis is protein primed, and acts in a strand displacement replication. Assembles in complex with viral pTP, DBP, host NFIA and host POU2F1/OCT1 on viral origin of replication. The polymerase covalently transfers dCMP onto pTP, thereby initiating complementary strand synthesis. In Homo sapiens (Human), this protein is DNA polymerase.